Consider the following 465-residue polypeptide: Neuromedin-K receptor (465 aa).

At 1–84 (MATLPAAETW…TNQFVQPSWR (84 aa)) the chain is on the extracellular side. N-linked (GlcNAc...) asparagine glycosylation is found at Asn-23, Asn-50, and Asn-73. A helical membrane pass occupies residues 85 to 107 (IALWSLAYGVVVAVAVLGNLIVI). Topologically, residues 108-117 (WIILAHKRMR) are cytoplasmic. A helical membrane pass occupies residues 118–139 (TVTNYFLVNLAFSDASMAAFNT). The Extracellular portion of the chain corresponds to 140–159 (LVNFIYALHSEWYFGANYCR). A disulfide bridge links Cys-158 with Cys-233. A helical transmembrane segment spans residues 160–181 (FQNFFPITAVFASIYSMTAIAV). At 182-201 (DRYMAIIDPLKPRLSATATK) the chain is on the cytoplasmic side. Residues 202 to 222 (IVIGSIWILAFLLAFPQCLYS) traverse the membrane as a helical segment. Residues 223 to 245 (KTKVMPGRTLCFVQWPEGPKQHF) lie on the Extracellular side of the membrane. The chain crosses the membrane as a helical span at residues 246–270 (TYHIIVIILVYCFPLLIMGITYTIV). At 271–299 (GITLWGGEIPGDTCDKYHEQLKAKRKVVK) the chain is on the cytoplasmic side. Residues 300–321 (MMIIVVMTFAICWLPYHIYFIL) traverse the membrane as a helical segment. The Extracellular portion of the chain corresponds to 322–334 (TAIYQQLNRWKYI). The chain crosses the membrane as a helical span at residues 335–359 (QQVYLASFWLAMSSTMYNPIIYCCL). Over 360 to 465 (NKRFRAGFKR…SPYTSVDEYS (106 aa)) the chain is Cytoplasmic. The S-palmitoyl cysteine moiety is linked to residue Cys-374. The disordered stretch occupies residues 415–465 (PNDADTTRSSRKKRATPRDPSFNGCSRRNSKSASATSSFISSPYTSVDEYS). Residues 445-465 (KSASATSSFISSPYTSVDEYS) show a composition bias toward low complexity.

It belongs to the G-protein coupled receptor 1 family. Post-translationally, the anchoring of this receptor to the plasma membrane is probably mediated by the palmitoylation of a cysteine residue.

It is found in the cell membrane. This is a receptor for the tachykinin neuropeptide neuromedin-K (neurokinin B). It is associated with G proteins that activate a phosphatidylinositol-calcium second messenger system. The rank order of affinity of this receptor to tachykinins is: neuromedin-K &gt; substance K &gt; substance P. The polypeptide is Neuromedin-K receptor (TACR3) (Homo sapiens (Human)).